We begin with the raw amino-acid sequence, 365 residues long: UDP-N-acetylglucosamine--N-acetylmuramyl-(pentapeptide) pyrophosphoryl-undecaprenol N-acetylglucosamine transferase (365 aa).

Residues 17-19 (TGG), N129, R167, S194, I250, 269-274 (ALTVSE), and Q295 each bind UDP-N-acetyl-alpha-D-glucosamine.

The protein belongs to the glycosyltransferase 28 family. MurG subfamily.

It is found in the cell inner membrane. The catalysed reaction is di-trans,octa-cis-undecaprenyl diphospho-N-acetyl-alpha-D-muramoyl-L-alanyl-D-glutamyl-meso-2,6-diaminopimeloyl-D-alanyl-D-alanine + UDP-N-acetyl-alpha-D-glucosamine = di-trans,octa-cis-undecaprenyl diphospho-[N-acetyl-alpha-D-glucosaminyl-(1-&gt;4)]-N-acetyl-alpha-D-muramoyl-L-alanyl-D-glutamyl-meso-2,6-diaminopimeloyl-D-alanyl-D-alanine + UDP + H(+). Its pathway is cell wall biogenesis; peptidoglycan biosynthesis. Cell wall formation. Catalyzes the transfer of a GlcNAc subunit on undecaprenyl-pyrophosphoryl-MurNAc-pentapeptide (lipid intermediate I) to form undecaprenyl-pyrophosphoryl-MurNAc-(pentapeptide)GlcNAc (lipid intermediate II). This Shewanella woodyi (strain ATCC 51908 / MS32) protein is UDP-N-acetylglucosamine--N-acetylmuramyl-(pentapeptide) pyrophosphoryl-undecaprenol N-acetylglucosamine transferase.